Consider the following 40-residue polypeptide: MNDTTGRIPLWIIGTVTGIFGIGLIGIFFYGSYSGLGSSL.

A helical membrane pass occupies residues 8–28 (IPLWIIGTVTGIFGIGLIGIF).

It belongs to the PsbJ family. In terms of assembly, PSII is composed of 1 copy each of membrane proteins PsbA, PsbB, PsbC, PsbD, PsbE, PsbF, PsbH, PsbI, PsbJ, PsbK, PsbL, PsbM, PsbT, PsbX, PsbY, PsbZ, Psb30/Ycf12, at least 3 peripheral proteins of the oxygen-evolving complex and a large number of cofactors. It forms dimeric complexes.

The protein resides in the plastid membrane. Its function is as follows. One of the components of the core complex of photosystem II (PSII). PSII is a light-driven water:plastoquinone oxidoreductase that uses light energy to abstract electrons from H(2)O, generating O(2) and a proton gradient subsequently used for ATP formation. It consists of a core antenna complex that captures photons, and an electron transfer chain that converts photonic excitation into a charge separation. The sequence is that of Photosystem II reaction center protein J from Cuscuta reflexa (Southern Asian dodder).